Reading from the N-terminus, the 430-residue chain is Glutamate-1-semialdehyde 2,1-aminomutase (430 aa).

Lys265 bears the N6-(pyridoxal phosphate)lysine mark.

Belongs to the class-III pyridoxal-phosphate-dependent aminotransferase family. HemL subfamily. Requires pyridoxal 5'-phosphate as cofactor.

Its subcellular location is the cytoplasm. It carries out the reaction (S)-4-amino-5-oxopentanoate = 5-aminolevulinate. Its pathway is porphyrin-containing compound metabolism; protoporphyrin-IX biosynthesis; 5-aminolevulinate from L-glutamyl-tRNA(Glu): step 2/2. In Caldivirga maquilingensis (strain ATCC 700844 / DSM 13496 / JCM 10307 / IC-167), this protein is Glutamate-1-semialdehyde 2,1-aminomutase.